A 655-amino-acid chain; its full sequence is Carboxypeptidase S1 homolog B (655 aa).

Positions 1-21 are cleaved as a signal peptide; that stretch reads MRPFARAALCLLAAAGHLAQA. Residues Cys-51 and Cys-123 are joined by a disulfide bond. Asn-130, Asn-163, and Asn-186 each carry an N-linked (GlcNAc...) asparagine glycan. Residue Ser-240 is part of the active site. N-linked (GlcNAc...) asparagine glycans are attached at residues Asn-266, Asn-302, and Asn-311. 2 disulfide bridges follow: Cys-328–Cys-364 and Cys-335–Cys-357. Asn-414 carries N-linked (GlcNAc...) asparagine glycosylation. The active site involves Asp-459. Cys-462 contributes to the substrate binding site. Residues Asn-475, Asn-493, and Asn-506 are each glycosylated (N-linked (GlcNAc...) asparagine). His-517 is an active-site residue. Substrate is bound at residue Glu-518. N-linked (GlcNAc...) asparagine glycans are attached at residues Asn-598 and Asn-612. Gly-631 is lipidated: GPI-anchor amidated glycine. Positions 632–655 are cleaved as a propeptide — removed in mature form; sequence AALVSGRIKFHVHVIKSFDYYIFI.

It belongs to the peptidase S10 family.

The protein resides in the cell membrane. The enzyme catalyses Preferential release of a C-terminal arginine or lysine residue.. Extracellular serine carboxypeptidase that contributes to pathogenicity. The sequence is that of Carboxypeptidase S1 homolog B (SCPB) from Arthroderma otae (strain ATCC MYA-4605 / CBS 113480) (Microsporum canis).